We begin with the raw amino-acid sequence, 60 residues long: Protein translocase subunit SecE (60 aa).

A helical membrane pass occupies residues 31-51 (VIVVSTVIFFLVFFYALDLGI).

The protein belongs to the SecE/SEC61-gamma family. As to quaternary structure, component of the Sec protein translocase complex. Heterotrimer consisting of SecY, SecE and SecG subunits. The heterotrimers can form oligomers, although 1 heterotrimer is thought to be able to translocate proteins. Interacts with the ribosome. Interacts with SecDF, and other proteins may be involved. Interacts with SecA.

Its subcellular location is the cell membrane. Functionally, essential subunit of the Sec protein translocation channel SecYEG. Clamps together the 2 halves of SecY. May contact the channel plug during translocation. The polypeptide is Protein translocase subunit SecE (Staphylococcus aureus (strain Mu50 / ATCC 700699)).